We begin with the raw amino-acid sequence, 312 residues long: Mycothiol acetyltransferase (312 aa).

N-acetyltransferase domains lie at 8–136 (PIIR…LPMP) and 149–301 (LRLD…HQDH). Glu-38 is a 1D-myo-inositol 2-(L-cysteinylamino)-2-deoxy-alpha-D-glucopyranoside binding site. Acetyl-CoA-binding positions include 77 to 79 (LMV) and 85 to 90 (RQGIAT). The 1D-myo-inositol 2-(L-cysteinylamino)-2-deoxy-alpha-D-glucopyranoside site is built by Glu-175, Lys-215, and Glu-226. Acetyl-CoA contacts are provided by residues 230–232 (LGV) and 237–243 (EGKGVGR). A 1D-myo-inositol 2-(L-cysteinylamino)-2-deoxy-alpha-D-glucopyranoside-binding site is contributed by Tyr-264. 269-274 (NERVVH) is an acetyl-CoA binding site. Residues 292 to 312 (PAKPARHQDHGRQSSPQERDA) form a disordered region. Positions 297 to 312 (RHQDHGRQSSPQERDA) are enriched in basic and acidic residues.

This sequence belongs to the acetyltransferase family. MshD subfamily. Monomer.

It carries out the reaction 1D-myo-inositol 2-(L-cysteinylamino)-2-deoxy-alpha-D-glucopyranoside + acetyl-CoA = mycothiol + CoA + H(+). Functionally, catalyzes the transfer of acetyl from acetyl-CoA to desacetylmycothiol (Cys-GlcN-Ins) to form mycothiol. The polypeptide is Mycothiol acetyltransferase (Propionibacterium freudenreichii subsp. shermanii (strain ATCC 9614 / DSM 4902 / CIP 103027 / NCIMB 8099 / CIRM-BIA1)).